Reading from the N-terminus, the 328-residue chain is Phenylalanine--tRNA ligase alpha subunit (328 aa).

E245 contributes to the Mg(2+) binding site.

Belongs to the class-II aminoacyl-tRNA synthetase family. Phe-tRNA synthetase alpha subunit type 1 subfamily. In terms of assembly, tetramer of two alpha and two beta subunits. The cofactor is Mg(2+).

Its subcellular location is the cytoplasm. It catalyses the reaction tRNA(Phe) + L-phenylalanine + ATP = L-phenylalanyl-tRNA(Phe) + AMP + diphosphate + H(+). The polypeptide is Phenylalanine--tRNA ligase alpha subunit (Helicobacter acinonychis (strain Sheeba)).